Here is a 405-residue protein sequence, read N- to C-terminus: 4-hydroxy-3-methylbut-2-enyl diphosphate reductase (405 aa).

Cysteine 66 provides a ligand contact to [4Fe-4S] cluster. Histidine 96 is a (2E)-4-hydroxy-3-methylbut-2-enyl diphosphate binding site. A dimethylallyl diphosphate-binding site is contributed by histidine 96. An isopentenyl diphosphate-binding site is contributed by histidine 96. Cysteine 158 contacts [4Fe-4S] cluster. Histidine 186 lines the (2E)-4-hydroxy-3-methylbut-2-enyl diphosphate pocket. Histidine 186 is a dimethylallyl diphosphate binding site. Histidine 186 serves as a coordination point for isopentenyl diphosphate. Residue glutamate 188 is the Proton donor of the active site. Threonine 251 contacts (2E)-4-hydroxy-3-methylbut-2-enyl diphosphate. Cysteine 289 contacts [4Fe-4S] cluster. Residues serine 318, serine 319, asparagine 320, and serine 380 each coordinate (2E)-4-hydroxy-3-methylbut-2-enyl diphosphate. Dimethylallyl diphosphate is bound by residues serine 318, serine 319, asparagine 320, and serine 380. Residues serine 318, serine 319, asparagine 320, and serine 380 each contribute to the isopentenyl diphosphate site.

Belongs to the IspH family. [4Fe-4S] cluster serves as cofactor.

The catalysed reaction is isopentenyl diphosphate + 2 oxidized [2Fe-2S]-[ferredoxin] + H2O = (2E)-4-hydroxy-3-methylbut-2-enyl diphosphate + 2 reduced [2Fe-2S]-[ferredoxin] + 2 H(+). The enzyme catalyses dimethylallyl diphosphate + 2 oxidized [2Fe-2S]-[ferredoxin] + H2O = (2E)-4-hydroxy-3-methylbut-2-enyl diphosphate + 2 reduced [2Fe-2S]-[ferredoxin] + 2 H(+). Its pathway is isoprenoid biosynthesis; dimethylallyl diphosphate biosynthesis; dimethylallyl diphosphate from (2E)-4-hydroxy-3-methylbutenyl diphosphate: step 1/1. The protein operates within isoprenoid biosynthesis; isopentenyl diphosphate biosynthesis via DXP pathway; isopentenyl diphosphate from 1-deoxy-D-xylulose 5-phosphate: step 6/6. Functionally, catalyzes the conversion of 1-hydroxy-2-methyl-2-(E)-butenyl 4-diphosphate (HMBPP) into a mixture of isopentenyl diphosphate (IPP) and dimethylallyl diphosphate (DMAPP). Acts in the terminal step of the DOXP/MEP pathway for isoprenoid precursor biosynthesis. The sequence is that of 4-hydroxy-3-methylbut-2-enyl diphosphate reductase from Cyanothece sp. (strain PCC 7425 / ATCC 29141).